Consider the following 120-residue polypeptide: Myohemerythrin (120 aa).

Fe cation is bound by residues His-26, His-56, Glu-60, His-75, His-79, His-108, and Asp-113.

It belongs to the hemerythrin family.

Myohemerythrin is an oxygen-binding protein found in the retractor muscles of certain worms. The oxygen-binding site contains two iron atoms. This Sipunculus nudus (Sipunculan worm) protein is Myohemerythrin.